Here is a 278-residue protein sequence, read N- to C-terminus: Ribosomal RNA small subunit methyltransferase A (278 aa).

6 residues coordinate S-adenosyl-L-methionine: Asn-25, Leu-27, Gly-52, Glu-73, Asp-97, and Asn-117.

It belongs to the class I-like SAM-binding methyltransferase superfamily. rRNA adenine N(6)-methyltransferase family. RsmA subfamily.

Its subcellular location is the cytoplasm. The catalysed reaction is adenosine(1518)/adenosine(1519) in 16S rRNA + 4 S-adenosyl-L-methionine = N(6)-dimethyladenosine(1518)/N(6)-dimethyladenosine(1519) in 16S rRNA + 4 S-adenosyl-L-homocysteine + 4 H(+). Its function is as follows. Specifically dimethylates two adjacent adenosines (A1518 and A1519) in the loop of a conserved hairpin near the 3'-end of 16S rRNA in the 30S particle. May play a critical role in biogenesis of 30S subunits. The sequence is that of Ribosomal RNA small subunit methyltransferase A from Desulfitobacterium hafniense (strain DSM 10664 / DCB-2).